Reading from the N-terminus, the 331-residue chain is Probable transaldolase (331 aa).

Residue lysine 142 is the Schiff-base intermediate with substrate of the active site.

This sequence belongs to the transaldolase family. Type 1 subfamily. In terms of assembly, homodimer.

The protein resides in the cytoplasm. It catalyses the reaction D-sedoheptulose 7-phosphate + D-glyceraldehyde 3-phosphate = D-erythrose 4-phosphate + beta-D-fructose 6-phosphate. It participates in carbohydrate degradation; pentose phosphate pathway; D-glyceraldehyde 3-phosphate and beta-D-fructose 6-phosphate from D-ribose 5-phosphate and D-xylulose 5-phosphate (non-oxidative stage): step 2/3. Functionally, transaldolase is important for the balance of metabolites in the pentose-phosphate pathway. In Drosophila melanogaster (Fruit fly), this protein is Probable transaldolase.